A 428-amino-acid polypeptide reads, in one-letter code: Histidinol dehydrogenase (428 aa).

Positions 127, 185, and 208 each coordinate NAD(+). S232, Q254, and H257 together coordinate substrate. Zn(2+) is bound by residues Q254 and H257. Catalysis depends on proton acceptor residues E321 and H322. Residues H322, D355, E409, and H414 each coordinate substrate. D355 contacts Zn(2+). H414 lines the Zn(2+) pocket.

It belongs to the histidinol dehydrogenase family. It depends on Zn(2+) as a cofactor.

It carries out the reaction L-histidinol + 2 NAD(+) + H2O = L-histidine + 2 NADH + 3 H(+). Its pathway is amino-acid biosynthesis; L-histidine biosynthesis; L-histidine from 5-phospho-alpha-D-ribose 1-diphosphate: step 9/9. In terms of biological role, catalyzes the sequential NAD-dependent oxidations of L-histidinol to L-histidinaldehyde and then to L-histidine. This is Histidinol dehydrogenase from Pasteurella multocida (strain Pm70).